We begin with the raw amino-acid sequence, 250 residues long: MFEGPLQDVIDEFSRLPGIGPKSAQRIALHLLNEEPEDIERFQSALGRLQRGVTFCRICHNISQEDVCRICADSNRDKSIICVVEESKDIQVIERTAEYRGRYHVLGGALDPLNGIGPKELNVTPLVQRIGGALPDVALGAKGGGASLGDADTPADGESSGADAAETGNAKTAAVETDVEYDEAPEITEVIIATDPNTEGEATASYLGRLLRDFPGLTVTRLASGIPMGGDLEFVDELTLSRAFAGRTAL.

Residues C56 to C71 form a C4-type zinc finger. A Toprim domain is found at S79 to P227. A disordered region spans residues L148 to T172.

This sequence belongs to the RecR family.

Functionally, may play a role in DNA repair. It seems to be involved in an RecBC-independent recombinational process of DNA repair. It may act with RecF and RecO. This Corynebacterium jeikeium (strain K411) protein is Recombination protein RecR.